A 118-amino-acid chain; its full sequence is Large ribosomal subunit protein uL18 (118 aa).

It belongs to the universal ribosomal protein uL18 family. Part of the 50S ribosomal subunit; part of the 5S rRNA/L5/L18/L25 subcomplex. Contacts the 5S and 23S rRNAs.

In terms of biological role, this is one of the proteins that bind and probably mediate the attachment of the 5S RNA into the large ribosomal subunit, where it forms part of the central protuberance. This is Large ribosomal subunit protein uL18 from Limosilactobacillus reuteri (strain DSM 20016) (Lactobacillus reuteri).